Reading from the N-terminus, the 267-residue chain is NAD kinase (267 aa).

Asp-52 functions as the Proton acceptor in the catalytic mechanism. NAD(+) contacts are provided by residues 52–53, Arg-57, 121–122, Arg-132, Lys-150, Asp-152, 163–168, and Ala-187; these read DG, NE, and TAYSLS.

It belongs to the NAD kinase family. Requires a divalent metal cation as cofactor.

The protein localises to the cytoplasm. It carries out the reaction NAD(+) + ATP = ADP + NADP(+) + H(+). Its function is as follows. Involved in the regulation of the intracellular balance of NAD and NADP, and is a key enzyme in the biosynthesis of NADP. Catalyzes specifically the phosphorylation on 2'-hydroxyl of the adenosine moiety of NAD to yield NADP. This Fusobacterium nucleatum subsp. nucleatum (strain ATCC 25586 / DSM 15643 / BCRC 10681 / CIP 101130 / JCM 8532 / KCTC 2640 / LMG 13131 / VPI 4355) protein is NAD kinase.